The sequence spans 61 residues: MDPNCSCATGDSCACASTCKCKECKCTSCKKSCCSCCPVGCAKCAQGCICKGASDKCSCCA.

Met-1 carries the N-acetylmethionine modification. The interval 1 to 29 (MDPNCSCATGDSCACASTCKCKECKCTSC) is beta. A divalent metal cation contacts are provided by Cys-5, Cys-7, Cys-13, Cys-15, Cys-19, Cys-21, Cys-24, Cys-26, Cys-29, Cys-33, Cys-34, Cys-36, Cys-37, Cys-41, Cys-44, Cys-48, Cys-50, and Cys-57. Positions 30–61 (KKSCCSCCPVGCAKCAQGCICKGASDKCSCCA) are alpha. A Phosphoserine modification is found at Ser-58. Cys-59 and Cys-60 together coordinate a divalent metal cation.

This sequence belongs to the metallothionein superfamily. Type 1 family.

Its function is as follows. Metallothioneins have a high content of cysteine residues that bind various heavy metals; these proteins are transcriptionally regulated by both heavy metals and glucocorticoids. This isoform may play a role in regulating the transport, accumulation, and compartmentation of zinc in the hippocampus. This chain is Metallothionein-I, hippocampal, found in Bos taurus (Bovine).